The primary structure comprises 229 residues: Heptaprenylglyceryl phosphate synthase (229 aa).

K12 is a sn-glycerol 1-phosphate binding site. Mg(2+) contacts are provided by D14 and T40. Residues 159 to 164, G189, and 209 to 210 each bind sn-glycerol 1-phosphate; these read YIEYSG and GN.

It belongs to the GGGP/HepGP synthase family. Group I subfamily. Homodimer. It depends on Mg(2+) as a cofactor.

The enzyme catalyses sn-glycerol 1-phosphate + all-trans-heptaprenyl diphosphate = 3-heptaprenyl-sn-glycero-1-phosphate + diphosphate. It participates in membrane lipid metabolism; glycerophospholipid metabolism. Functionally, prenyltransferase that catalyzes in vivo the transfer of the heptaprenyl moiety of heptaprenyl pyrophosphate (HepPP; 35 carbon atoms) to the C3 hydroxyl of sn-glycerol-1-phosphate (G1P), producing heptaprenylglyceryl phosphate (HepGP). This reaction is an ether-bond-formation step in the biosynthesis of archaea-type G1P-based membrane lipids found in Bacillales. In Oceanobacillus iheyensis (strain DSM 14371 / CIP 107618 / JCM 11309 / KCTC 3954 / HTE831), this protein is Heptaprenylglyceryl phosphate synthase.